Reading from the N-terminus, the 360-residue chain is Phospho-N-acetylmuramoyl-pentapeptide-transferase (360 aa).

A run of 10 helical transmembrane segments spans residues 27-47, 73-93, 94-114, 132-152, 168-188, 199-219, 236-256, 263-283, 288-308, and 338-358; these read IVSL…MIAW, TMGG…WANL, SNPY…VGFV, WKYF…YSIG, VMPQ…VGTS, GLAI…AWAT, ASEL…FLWF, VFMG…IAVL, FLLV…ILQV, and VIVR…ATLK.

This sequence belongs to the glycosyltransferase 4 family. MraY subfamily. Requires Mg(2+) as cofactor.

Its subcellular location is the cell inner membrane. It carries out the reaction UDP-N-acetyl-alpha-D-muramoyl-L-alanyl-gamma-D-glutamyl-meso-2,6-diaminopimeloyl-D-alanyl-D-alanine + di-trans,octa-cis-undecaprenyl phosphate = di-trans,octa-cis-undecaprenyl diphospho-N-acetyl-alpha-D-muramoyl-L-alanyl-D-glutamyl-meso-2,6-diaminopimeloyl-D-alanyl-D-alanine + UMP. The protein operates within cell wall biogenesis; peptidoglycan biosynthesis. In terms of biological role, catalyzes the initial step of the lipid cycle reactions in the biosynthesis of the cell wall peptidoglycan: transfers peptidoglycan precursor phospho-MurNAc-pentapeptide from UDP-MurNAc-pentapeptide onto the lipid carrier undecaprenyl phosphate, yielding undecaprenyl-pyrophosphoryl-MurNAc-pentapeptide, known as lipid I. This chain is Phospho-N-acetylmuramoyl-pentapeptide-transferase, found in Pectobacterium atrosepticum (strain SCRI 1043 / ATCC BAA-672) (Erwinia carotovora subsp. atroseptica).